Reading from the N-terminus, the 155-residue chain is Small ribosomal subunit protein uS7cz/uS7cy (155 aa).

Belongs to the universal ribosomal protein uS7 family. In terms of assembly, part of the 30S ribosomal subunit.

It localises to the plastid. The protein resides in the chloroplast. Functionally, one of the primary rRNA binding proteins, it binds directly to 16S rRNA where it nucleates assembly of the head domain of the 30S subunit. The polypeptide is Small ribosomal subunit protein uS7cz/uS7cy (rps7-A) (Drimys granadensis).